A 287-amino-acid polypeptide reads, in one-letter code: Neuferricin homolog (287 aa).

The signal sequence occupies residues methionine 1 to glycine 22. The region spanning glycine 61–glycine 146 is the Cytochrome b5 heme-binding domain. The stretch at tyrosine 175–asparagine 204 forms a coiled coil.

It belongs to the cytochrome b5 family. MAPR subfamily.

It localises to the secreted. Its function is as follows. Heme-binding protein. This is Neuferricin homolog from Drosophila melanogaster (Fruit fly).